The sequence spans 763 residues: MDSTTSSSRFSVSSPQSGPSAGIQKGRQRTITACLTCRRRKVKCDHAQPVCTPCQRGGRVCTYVTPQPVSQAPSRVGTGSRVSRTNLRSGQEEIRSRLERLEKLLERAISGGGNMSILPDAKGTSTGSPSDVDQGGNALPNPKCETLSADGYDGALLLEAEGGQSRWVSSLHYALLADEIHDVKMLLGDQSSGAPADSPPSDQPTPPFPFSGSTVESLTPWSPKSAEDCLALLEIFYSNVDPMTRLVHKPTLQRRFTQYINHTYGTRTQSPGVEEAADASRPDHTIHAFEPLALAIFYSAINSLSAEDVMMRFAAEKDALLAQFQRGVELGLGREDFLTTPSIEVLQAFVLLLTCQSREDDMSRTWTLLGLVVRMALSQGLHREPSLFPSSNMDVVQVETRRRLWHQICHLDFRSAEGRGQEPTIADEDYTTLLPRNINDEDLIEGAHPTAETYSPPGFTDMTGHLIRLHGIHCFRRIVRSTYRLERRIKSSVANGNGNLYPIAELQSLFVEVRTMVDEMVNHLQTQYLQYCDPQIPHQRMALGLAAVIEWRCWSIFWLRTPKQYREAVVSPEIRQTVLAKSVSLVESLNMMSDDKDAQKFQWHIGGHACFQSIMHIVSELETPEFQAANHRSLRSRALSVLKRTMDTRGHEVTPMWNVINRIISNCLAKNAPSTFPLSPFQAMFPPNAAIPGLGSSTTVPPQTIAQNSSVSGGSAMATPLPDLSEVGSLDMQDPTLAFDWVSESNALMRRSPLMFWVGVLEL.

Residues 1 to 20 (MDSTTSSSRFSVSSPQSGPS) show a composition bias toward low complexity. The disordered stretch occupies residues 1 to 25 (MDSTTSSSRFSVSSPQSGPSAGIQK). Residues 34 to 61 (CLTCRRRKVKCDHAQPVCTPCQRGGRVC) constitute a DNA-binding region (zn(2)-C6 fungal-type). Disordered regions lie at residues 68–91 (PVSQ…RSGQ), 112–145 (GGNM…PKCE), and 189–219 (DQSS…ESLT). Positions 80-89 (SRVSRTNLRS) are enriched in polar residues. Pro residues predominate over residues 197–209 (DSPPSDQPTPPFP).

The protein resides in the nucleus. Its function is as follows. Transcription factor; part of the gene cluster that mediates the biosynthesis of hexadehydro-astechrome (HAS), a tryptophan-derived iron(III)-complex that acts as a virulence factor in infected mice. Does not regulate the expression of the HAS biosynthetic genes (at least under the growth conditions tested). This Aspergillus fumigatus (strain CBS 144.89 / FGSC A1163 / CEA10) (Neosartorya fumigata) protein is C6 finger domain transcription factor hasF.